We begin with the raw amino-acid sequence, 82 residues long: Immediate early response 3-interacting protein 1 (82 aa).

2 helical membrane passes run 2–22 and 62–82; these read AFTL…IAVL and VMRV…LLFG.

This sequence belongs to the YOS1 family.

The protein resides in the endoplasmic reticulum membrane. In terms of biological role, regulator of endoplasmic reticulum secretion that acts as a key determinant of brain size. Required for secretion of extracellular matrix proteins. Required for correct brain development by depositing sufficient extracellular matrix proteins for tissue integrity and the proliferation of neural progenitors. Acts as a regulator of the unfolded protein response (UPR). This Danio rerio (Zebrafish) protein is Immediate early response 3-interacting protein 1.